Here is a 94-residue protein sequence, read N- to C-terminus: Co-chaperonin GroES (94 aa).

The protein belongs to the GroES chaperonin family. Heptamer of 7 subunits arranged in a ring. Interacts with the chaperonin GroEL.

It localises to the cytoplasm. Together with the chaperonin GroEL, plays an essential role in assisting protein folding. The GroEL-GroES system forms a nano-cage that allows encapsulation of the non-native substrate proteins and provides a physical environment optimized to promote and accelerate protein folding. GroES binds to the apical surface of the GroEL ring, thereby capping the opening of the GroEL channel. This is Co-chaperonin GroES from Clostridium perfringens (strain SM101 / Type A).